We begin with the raw amino-acid sequence, 568 residues long: Proline--tRNA ligase (568 aa).

The protein belongs to the class-II aminoacyl-tRNA synthetase family. ProS type 1 subfamily. As to quaternary structure, homodimer.

The protein localises to the cytoplasm. The catalysed reaction is tRNA(Pro) + L-proline + ATP = L-prolyl-tRNA(Pro) + AMP + diphosphate. In terms of biological role, catalyzes the attachment of proline to tRNA(Pro) in a two-step reaction: proline is first activated by ATP to form Pro-AMP and then transferred to the acceptor end of tRNA(Pro). As ProRS can inadvertently accommodate and process non-cognate amino acids such as alanine and cysteine, to avoid such errors it has two additional distinct editing activities against alanine. One activity is designated as 'pretransfer' editing and involves the tRNA(Pro)-independent hydrolysis of activated Ala-AMP. The other activity is designated 'posttransfer' editing and involves deacylation of mischarged Ala-tRNA(Pro). The misacylated Cys-tRNA(Pro) is not edited by ProRS. The chain is Proline--tRNA ligase from Halothermothrix orenii (strain H 168 / OCM 544 / DSM 9562).